A 312-amino-acid polypeptide reads, in one-letter code: MSDSPKHITVLLHEAVDGLAIKPNGIYVDGTFGRGGHSRLILSKLGEQGRLIAIDRDPRAIAEANTITDPRFQIVHSAFSSIPDICDELNLVGKIDGILLDLGVSSPQLDEAERGFSFMRDGPLDMRMDTTKGLSAMEWLAQVSVDDLAWVLKEFGEERFAKRIAQAVVSYNKSATEKISRTLQLAQIIADVVPFKDKHKHPATRSFQAIRIYINSELDELEKALNSALTVLAPEGRLSIISFHSLEDRMVKQFMRKQSKGETVPKGLPILESELNKNIPLKTVGKAIMPSEAEIEANPRSRSAVLRVAEKR.

S-adenosyl-L-methionine-binding positions include 35–37 (GGH), Asp-55, Phe-79, Asp-101, and Gln-108.

This sequence belongs to the methyltransferase superfamily. RsmH family.

The protein resides in the cytoplasm. It catalyses the reaction cytidine(1402) in 16S rRNA + S-adenosyl-L-methionine = N(4)-methylcytidine(1402) in 16S rRNA + S-adenosyl-L-homocysteine + H(+). Its function is as follows. Specifically methylates the N4 position of cytidine in position 1402 (C1402) of 16S rRNA. This chain is Ribosomal RNA small subunit methyltransferase H, found in Glaesserella parasuis serovar 5 (strain SH0165) (Haemophilus parasuis).